Consider the following 418-residue polypeptide: Beta-2 adrenergic receptor (418 aa).

At 1-34 (MGQPGNRSVFLLAPNGSHAPDQDVPQERDEAWVV) the chain is on the extracellular side. Residues N6 and N15 are each glycosylated (N-linked (GlcNAc...) asparagine). The chain crosses the membrane as a helical span at residues 35–58 (GMAIVMSLIVLAIVFGNVLVITAI). The Cytoplasmic segment spans residues 59 to 71 (AKFERLQTVTNYF). The chain crosses the membrane as a helical span at residues 72–95 (ITSLACADLVMGLAVVPFGASHIL). The Extracellular segment spans residues 96–106 (MKMWTFGSFWC). 2 disulfide bridges follow: C106/C191 and C184/C190. A helical membrane pass occupies residues 107 to 129 (EFWISIDVLCVTASIETLCVIAV). Over 130–150 (DRYLAITSPFKYQCLLTKNKA) the chain is Cytoplasmic. Y141 bears the Phosphotyrosine mark. The chain crosses the membrane as a helical span at residues 151 to 174 (RVVILMVWVVSGLISFLPIKMHWY). Residues 175–196 (QATHREALNCYAEEACCDFFTN) lie on the Extracellular side of the membrane. A helical transmembrane segment spans residues 197–220 (QPYAIASSIVSFYLPLVVMVFVYS). Residues 221–274 (RVFQVARRQLQKIDKSEGRFHAQNLSQAEQDGRSGPGHRRSSKFCLKEHKALKT) lie on the Cytoplasmic side of the membrane. S246 is modified (phosphoserine). A phosphoserine; by PKA mark is found at S261 and S262. A lipid anchor (S-palmitoyl cysteine) is attached at C265. The chain crosses the membrane as a helical span at residues 275-298 (LGIIMGTFTLCWLPFFIVNIVHGI). Over 299–305 (HDNLIPK) the chain is Extracellular. The chain crosses the membrane as a helical span at residues 306 to 329 (EVYILLNWVGYVNSAFNPLIYCRS). At 330–418 (PDFRMAFQEL…RNCSTNDSML (89 aa)) the chain is on the cytoplasmic side. The S-palmitoyl cysteine moiety is linked to residue C341. Phosphoserine; by PKA occurs at positions 345 and 346. 2 positions are modified to phosphoserine; by BARK: S355 and S356. The tract at residues 381 to 418 (RLCEDAPGPEGCAHRQGTVPDDSTDSQGRNCSTNDSML) is disordered. P387 and P400 each carry 4-hydroxyproline. The segment covering 405–418 (DSQGRNCSTNDSML) has biased composition (polar residues). Positions 415–418 (DSML) match the PDZ-binding motif.

It belongs to the G-protein coupled receptor 1 family. Adrenergic receptor subfamily. ADRB2 sub-subfamily. As to quaternary structure, binds NHERF1 and GPRASP1. Interacts with ARRB1 and ARRB2. Interacts with SRC. Interacts with USP20 and USP33. Interacts with VHL; the interaction, which is increased on hydroxylation of ADRB2, ubiquitinates ADRB2 leading to its degradation. Interacts with EGLN3; the interaction hydroxylates ADRB2 facilitating VHL-E3 ligase-mediated ubiquitination. Interacts (via PDZ-binding motif) with SNX27 (via PDZ domain); the interaction is required when endocytosed to prevent degradation in lysosomes and promote recycling to the plasma membrane. Interacts with CNIH4. Interacts with ARRDC3. Interacts with NEDD4. Interacts with MARCHF2. Post-translationally, palmitoylated; may reduce accessibility of Ser-345 and Ser-346 by anchoring Cys-341 to the plasma membrane. Agonist stimulation promotes depalmitoylation and further allows Ser-345 and Ser-346 phosphorylation. In terms of processing, phosphorylated by PKA and BARK upon agonist stimulation, which mediates homologous desensitization of the receptor. PKA-mediated phosphorylation seems to facilitate phosphorylation by BARK. Phosphorylation of Tyr-141 is induced by insulin and leads to supersensitization of the receptor. Post-translationally, polyubiquitinated. Agonist-induced ubiquitination leads to sort internalized receptors to the lysosomes for degradation. Deubiquitination by USP20 and USP33, leads to ADRB2 recycling and resensitization after prolonged agonist stimulation. USP20 and USP33 are constitutively associated and are dissociated immediately after agonist stimulation. Ubiquitination by the VHL-E3 ligase complex is oxygen-dependent. In terms of processing, hydroxylation by EGLN3 occurs only under normoxia and increases the interaction with VHL and the subsequent ubiquitination and degradation of ADRB2. Palmitoylated. Mainly palmitoylated at Cys-341. Palmitoylation may reduce accessibility of phosphorylation sites by anchoring the receptor to the plasma membrane. Agonist stimulation promotes depalmitoylation and further allows Ser-345 and Ser-346 phosphorylation. Also undergoes transient, ligand-induced palmitoylation at Cys-265 probably by ZDHHC9, ZDHHC14 and ZDHHC18 within the Golgi. Palmitoylation at Cys-265 requires phosphorylation by PKA and receptor internalization and stabilizes the receptor. Could be depalmitoylated by LYPLA1 at the plasma membrane. As to expression, expressed in heart, liver, lung, skeletal muscle and subcutaneous adipose tissue.

The protein localises to the cell membrane. The protein resides in the early endosome. Its subcellular location is the golgi apparatus. Its function is as follows. Beta-adrenergic receptors mediate the catecholamine-induced activation of adenylate cyclase through the action of G proteins. The beta-2-adrenergic receptor binds epinephrine with an approximately 30-fold greater affinity than it does norepinephrine. The polypeptide is Beta-2 adrenergic receptor (ADRB2) (Sus scrofa (Pig)).